Reading from the N-terminus, the 142-residue chain is Ribosome maturation factor RimP (142 aa).

It belongs to the RimP family.

The protein resides in the cytoplasm. Functionally, required for maturation of 30S ribosomal subunits. The protein is Ribosome maturation factor RimP of Wolinella succinogenes (strain ATCC 29543 / DSM 1740 / CCUG 13145 / JCM 31913 / LMG 7466 / NCTC 11488 / FDC 602W) (Vibrio succinogenes).